The following is a 484-amino-acid chain: Serine hydroxymethyltransferase, cytosolic (484 aa).

A2 carries the N-acetylalanine modification. The residue at position 6 (N6) is a Deamidated asparagine; alternate. The isoaspartyl glycine isopeptide (Asn-Gly); alternate cross-link spans 6–7 (NG). C204 acts as the Nucleophile in catalysis. The active-site Proton donor is H256. At K257 the chain carries N6-(pyridoxal phosphate)lysine.

It belongs to the SHMT family. As to quaternary structure, homotetramer. Identified in complex with ABRAXAS2 and the other subunits of the BRISC complex, at least composed of ABRAXAS2, BRCC3/BRCC36, BABAM2 and BABAM1/NBA1. Pyridoxal 5'-phosphate serves as cofactor. Deamidation of asparagine produces alternatively aspartate or isoaspartate, which in turn can be converted to aspartate through carboxylmethylation/demethylation.

Its subcellular location is the cytoplasm. It carries out the reaction (6R)-5,10-methylene-5,6,7,8-tetrahydrofolate + glycine + H2O = (6S)-5,6,7,8-tetrahydrofolate + L-serine. It functions in the pathway one-carbon metabolism; tetrahydrofolate interconversion. Interconversion of serine and glycine. The polypeptide is Serine hydroxymethyltransferase, cytosolic (SHMT1) (Oryctolagus cuniculus (Rabbit)).